We begin with the raw amino-acid sequence, 185 residues long: Hypoxanthine/guanine phosphoribosyltransferase (185 aa).

This sequence belongs to the purine/pyrimidine phosphoribosyltransferase family. Archaeal HPRT subfamily. In terms of assembly, homodimer.

Its subcellular location is the cytoplasm. It catalyses the reaction IMP + diphosphate = hypoxanthine + 5-phospho-alpha-D-ribose 1-diphosphate. It carries out the reaction GMP + diphosphate = guanine + 5-phospho-alpha-D-ribose 1-diphosphate. Its pathway is purine metabolism; IMP biosynthesis via salvage pathway; IMP from hypoxanthine: step 1/1. Its function is as follows. Catalyzes a salvage reaction resulting in the formation of IMP that is energically less costly than de novo synthesis. In Methanococcus maripaludis (strain C6 / ATCC BAA-1332), this protein is Hypoxanthine/guanine phosphoribosyltransferase.